The chain runs to 334 residues: Ferredoxin--NADP reductase (334 aa).

7 residues coordinate FAD: D33, Q41, Y46, A86, F120, D286, and T327.

This sequence belongs to the ferredoxin--NADP reductase type 2 family. In terms of assembly, homodimer. The cofactor is FAD.

The enzyme catalyses 2 reduced [2Fe-2S]-[ferredoxin] + NADP(+) + H(+) = 2 oxidized [2Fe-2S]-[ferredoxin] + NADPH. The sequence is that of Ferredoxin--NADP reductase from Rickettsia massiliae (strain Mtu5).